The sequence spans 127 residues: Ribonuclease P protein component 1 (127 aa).

Belongs to the eukaryotic/archaeal RNase P protein component 1 family. As to quaternary structure, consists of a catalytic RNA component and at least 5 protein subunits. Forms a heterodimeric subcomplex with Rnp4. Reconstituted enzyme missing individual protein subunits is suboptimally active, showing each subunit contributes to optimization of activity.

It is found in the cytoplasm. The catalysed reaction is Endonucleolytic cleavage of RNA, removing 5'-extranucleotides from tRNA precursor.. In terms of biological role, part of ribonuclease P (RNase P), a protein complex that generates mature tRNA molecules by cleaving their 5'-ends. Binds RNase P RNA. This Pyrococcus horikoshii (strain ATCC 700860 / DSM 12428 / JCM 9974 / NBRC 100139 / OT-3) protein is Ribonuclease P protein component 1.